A 595-amino-acid chain; its full sequence is MSTISINLMSIIRNPLHSKSKRALINKHPSSSASRLVQPCRISSKIDTKPAEITRRSGNYEPSLWDFDYLQSLNTHHHYKKEEQLKREEELIVQVKMLLGTKMEAVEQLELIDDLKNLGLSYFFRDEIKKILTSIYNNSFENNNKVGDLYFTALGFRLLRQHGFNVSQRIFDCFKNEKGSHFDETLIGEDIKATLQLYEASFHLREGENTLELARQISTKYLQKMVDEGRINDENLSSWIRHSLDLPLHWRIQRLEARWFLDAYAVREDKNPLIFELAKLDFNIIQATQQEELKEVSRWWNDSCLAEKLPFLRDRIVEAYFWGVALFELLEFGYQRKITAIIIILVTAIDDVYDVYGTLDELQLFTDVIRRWNTQSIDQLPYYMQLCYMTLYNYVSNLGYEILKDRGINTIPHIHQSWVSLVEAFLKEEEWYESGYTPSLKEYLNNASISVGAIAVVIALELSIPNSTIHHRTRIDHRHKILHLSGLVSRLANDLGTAQHEMEKGNVPTAIQCYMKDTNASEEEAWEHVRFMIGEAWKRLNTAMAEADDCPFTEQAVEAAANFGRAAQFIYREGDGHGHFQIHQHVENLFFHPYV.

Residues 1 to 32 (MSTISINLMSIIRNPLHSKSKRALINKHPSSS) constitute a chloroplast transit peptide. Residues Asp-350 and Asp-354 each contribute to the Mn(2+) site. The DDXXD motif signature appears at 350–354 (DDVYD). 2 homodimerization regions span residues 356–362 (YGTLDEL) and 428–465 (EEEW…LSIP). Residues Asn-493 and Glu-501 each contribute to the Mn(2+) site.

It belongs to the terpene synthase family. In terms of assembly, homodimer. Requires Mn(2+) as cofactor. Mg(2+) is required as a cofactor. Expressed in peltate glandular trichomes. Present in flowers, leaves and stems.

It is found in the plastid. Its subcellular location is the chloroplast. The catalysed reaction is (2E)-geranyl diphosphate = (E)-beta-ocimene + diphosphate. The protein operates within secondary metabolite biosynthesis; terpenoid biosynthesis. In terms of biological role, involved in the biosynthesis of monoterpenes natural products. Monoterpene synthase that catalyzes mainly the formation of (E)-beta-ocimene and minor amounts of other monoterpenes (e.g. myrcene, (Z)-beta-ocimene, alpha- and gamma-terpinene) from geranyl diphosphate (GPP). In Origanum vulgare (Wild marjoram), this protein is (E)-beta-ocimene synthase, chloroplastic.